The sequence spans 284 residues: 2,3,4,5-tetrahydropyridine-2,6-dicarboxylate N-succinyltransferase (284 aa).

This sequence belongs to the transferase hexapeptide repeat family.

Its subcellular location is the cytoplasm. The catalysed reaction is (S)-2,3,4,5-tetrahydrodipicolinate + succinyl-CoA + H2O = (S)-2-succinylamino-6-oxoheptanedioate + CoA. Its pathway is amino-acid biosynthesis; L-lysine biosynthesis via DAP pathway; LL-2,6-diaminopimelate from (S)-tetrahydrodipicolinate (succinylase route): step 1/3. The protein is 2,3,4,5-tetrahydropyridine-2,6-dicarboxylate N-succinyltransferase of Brucella abortus (strain S19).